A 416-amino-acid polypeptide reads, in one-letter code: Serine hydroxymethyltransferase (416 aa).

Residues Leu121 and 125–127 (GHL) each bind (6S)-5,6,7,8-tetrahydrofolate. The residue at position 229 (Lys229) is an N6-(pyridoxal phosphate)lysine.

The protein belongs to the SHMT family. In terms of assembly, homodimer. Pyridoxal 5'-phosphate is required as a cofactor.

The protein resides in the cytoplasm. The catalysed reaction is (6R)-5,10-methylene-5,6,7,8-tetrahydrofolate + glycine + H2O = (6S)-5,6,7,8-tetrahydrofolate + L-serine. The protein operates within one-carbon metabolism; tetrahydrofolate interconversion. It participates in amino-acid biosynthesis; glycine biosynthesis; glycine from L-serine: step 1/1. Catalyzes the reversible interconversion of serine and glycine with tetrahydrofolate (THF) serving as the one-carbon carrier. This reaction serves as the major source of one-carbon groups required for the biosynthesis of purines, thymidylate, methionine, and other important biomolecules. Also exhibits THF-independent aldolase activity toward beta-hydroxyamino acids, producing glycine and aldehydes, via a retro-aldol mechanism. This Neisseria gonorrhoeae protein is Serine hydroxymethyltransferase.